Consider the following 427-residue polypeptide: tRNA(Ile)-lysidine synthase (427 aa).

Residue 29–34 (SGGVDS) coordinates ATP.

This sequence belongs to the tRNA(Ile)-lysidine synthase family.

It is found in the cytoplasm. The enzyme catalyses cytidine(34) in tRNA(Ile2) + L-lysine + ATP = lysidine(34) in tRNA(Ile2) + AMP + diphosphate + H(+). Its function is as follows. Ligates lysine onto the cytidine present at position 34 of the AUA codon-specific tRNA(Ile) that contains the anticodon CAU, in an ATP-dependent manner. Cytidine is converted to lysidine, thus changing the amino acid specificity of the tRNA from methionine to isoleucine. The protein is tRNA(Ile)-lysidine synthase of Thermosipho africanus (strain TCF52B).